Reading from the N-terminus, the 225-residue chain is 2-amino-5-formylamino-6-ribosylaminopyrimidin-4(3H)-one 5'-monophosphate deformylase (225 aa).

Residues Glu28, His30, Asp39, and His107 each contribute to the Fe cation site.

The protein belongs to the creatininase superfamily. FAPy deformylase family. Homodimer. The cofactor is Fe(2+). It depends on Zn(2+) as a cofactor.

The enzyme catalyses 2-amino-5-formylamino-6-(5-phospho-D-ribosylamino)pyrimidin-4(3H)-one + H2O = 2,5-diamino-6-(1-D-ribosylamino)pyrimidin-4(3H)-one 5'-phosphate + formate + H(+). The protein operates within cofactor biosynthesis; coenzyme F420 biosynthesis. It participates in cofactor biosynthesis; riboflavin biosynthesis. Catalyzes the hydrolysis of the formamide of 2-amino-5-formylamino-6-ribosylamino-4(3H)-pyrimidinone 5'-monophosphate (FAPy) to form 2,5-diamino-6-ribosylamino-4(3H)-pyrimidinone 5'-phosphate (APy). The polypeptide is 2-amino-5-formylamino-6-ribosylaminopyrimidin-4(3H)-one 5'-monophosphate deformylase (Methanocaldococcus fervens (strain DSM 4213 / JCM 15782 / AG86) (Methanococcus fervens)).